A 431-amino-acid chain; its full sequence is GTPase Obg (431 aa).

The Obg domain maps to 1–158 (MFVDQVKINV…REIRLELKVL (158 aa)). The interval 125 to 145 (GNIHFASPKNPAPEIAENGEP) is disordered. One can recognise an OBG-type G domain in the interval 159–335 (ADVGLVGFPS…LLQRTADMLA (177 aa)). Residues 165 to 172 (GFPSVGKS), 190 to 194 (FTTLV), 212 to 215 (DLPG), 282 to 285 (NKMD), and 316 to 318 (SAL) contribute to the GTP site. Mg(2+) contacts are provided by serine 172 and threonine 192. The region spanning 353-431 (YNFQPEAEFT…IDDFTFEYMA (79 aa)) is the OCT domain.

It belongs to the TRAFAC class OBG-HflX-like GTPase superfamily. OBG GTPase family. As to quaternary structure, monomer. Mg(2+) serves as cofactor.

Its subcellular location is the cytoplasm. In terms of biological role, an essential GTPase which binds GTP, GDP and possibly (p)ppGpp with moderate affinity, with high nucleotide exchange rates and a fairly low GTP hydrolysis rate. Plays a role in control of the cell cycle, stress response, ribosome biogenesis and in those bacteria that undergo differentiation, in morphogenesis control. The sequence is that of GTPase Obg from Levilactobacillus brevis (strain ATCC 367 / BCRC 12310 / CIP 105137 / JCM 1170 / LMG 11437 / NCIMB 947 / NCTC 947) (Lactobacillus brevis).